The primary structure comprises 1149 residues: Guanine nucleotide exchange factor DBS (1149 aa).

Positions 52–224 (MATASDEIMH…DLGGTLDYCH (173 aa)) constitute a CRAL-TRIO domain. A Spectrin repeat occupies 355 to 454 (HFEQGFREVK…SEVTRRRDLL (100 aa)). A phosphoserine mark is found at serine 457, serine 462, serine 471, and serine 480. Residues 503 to 528 (LETGAENKIQELNKIYKEYECILNQD) are a coiled coil. The interval 555–627 (KKLAAKQTRP…RTSSTGEEEE (73 aa)) is disordered. Positions 583-594 (PGSWRSSENSSS) are enriched in low complexity. The segment covering 607–616 (AKSEMSEPRQ) has biased composition (basic and acidic residues). At serine 621 the chain carries Phosphoserine. Threonine 622 carries the phosphothreonine modification. The 181-residue stretch at 632–812 (LRRHVMNELL…LGILKAVNDS (181 aa)) folds into the DH domain. In terms of domain architecture, PH spans 830–946 (KLLMQGSFSV…WVNEIRKVLT (117 aa)). A disordered region spans residues 956 to 1033 (SQHRALEQSH…EAPEEDGGWS (78 aa)). Low complexity predominate over residues 964-978 (SHSLPLPTPASTSPT). Phosphoserine occurs at positions 1033, 1034, 1041, and 1042. The 62-residue stretch at 1055-1116 (LVPGKYTVLM…PASSLATLLG (62 aa)) folds into the SH3 domain.

The protein belongs to the MCF2 family. As to quaternary structure, interacts with GTP-bound RAC1. Interacts with CDC42. Interacts with RHOA. Interacts with CCPG1, which results in specific inhibition of its exchange activity toward RHOA, but does not affect its activity on CDC42. In terms of processing, mainly phosphorylated on serine. As to expression, highest expression in the brain, where it is found in neurons and alpha-tanycytes (at protein level). Detected in brain, and at lower levels in the heart.

It is found in the cytoplasm. It localises to the cell membrane. In terms of biological role, guanine nucleotide exchange factor that catalyzes guanine nucleotide exchange on RHOA and CDC42, and thereby contributes to the regulation of RHOA and CDC42 signaling pathways. Seems to lack activity with RAC1. Becomes activated and highly tumorigenic by truncation of the N-terminus. This Rattus norvegicus (Rat) protein is Guanine nucleotide exchange factor DBS (Mcf2l).